A 264-amino-acid polypeptide reads, in one-letter code: Apolipoprotein A-I (264 aa).

A signal peptide spans 1-18 (MKAVVLAVAVLFLTGSQA). A run of 2 repeats spans residues 67 to 88 (LNLL…EQLG) and 89 to 110 (HVSQ…EEMN). The segment at 67–264 (LNLLENWDTL…DQITKHVTTQ (198 aa)) is 10 X approximate tandem repeats. Met-109 carries the methionine sulfoxide modification. One copy of the 3; half-length repeat lies at 111–121 (KDLEKVKKKVQ). Tandem repeats lie at residues 122-143 (PFLD…HKVE), 144-165 (PLSL…EKLG), and 166-187 (PLGK…SHLR). One copy of the 7; truncated repeat lies at 188-207 (TYTEEMGQILAERLGAIKES). A Methionine sulfoxide modification is found at Met-193. The stretch at 208–229 (TSLAEYQTKASEHLRTFSKKAK) is repeat 8. The stretch at 230 to 240 (PILEDLRQGLL) is one 9; half-length repeat. The stretch at 241 to 264 (PVAENFKTNIKNTFDQITKHVTTQ) is repeat 10.

Belongs to the apolipoprotein A1/A4/E family. Homodimer. Interacts with APOA1BP and CLU. Component of a sperm activating protein complex (SPAP), consisting of APOA1, an immunoglobulin heavy chain, an immunoglobulin light chain and albumin. Interacts with NDRG1. Interacts with SCGB3A2. Interacts with NAXE and YJEFN3. Glycosylated. Post-translationally, palmitoylated. In terms of processing, phosphorylation sites are present in the extracellular medium.

Its subcellular location is the secreted. Its function is as follows. Participates in the reverse transport of cholesterol from tissues to the liver for excretion by promoting cholesterol efflux from tissues and by acting as a cofactor for the lecithin cholesterol acyltransferase (LCAT). As part of the SPAP complex, activates spermatozoa motility. This is Apolipoprotein A-I (Apoa1) from Fukomys damarensis (Damaraland mole rat).